The sequence spans 295 residues: Pyridoxal 5'-phosphate synthase subunit PdxS (295 aa).

Aspartate 25 provides a ligand contact to D-ribose 5-phosphate. Lysine 82 acts as the Schiff-base intermediate with D-ribose 5-phosphate in catalysis. Glycine 154 provides a ligand contact to D-ribose 5-phosphate. Position 166 (arginine 166) interacts with D-glyceraldehyde 3-phosphate. D-ribose 5-phosphate contacts are provided by residues glycine 215 and 236-237 (GS).

Belongs to the PdxS/SNZ family. In the presence of PdxT, forms a dodecamer of heterodimers.

The enzyme catalyses aldehydo-D-ribose 5-phosphate + D-glyceraldehyde 3-phosphate + L-glutamine = pyridoxal 5'-phosphate + L-glutamate + phosphate + 3 H2O + H(+). It participates in cofactor biosynthesis; pyridoxal 5'-phosphate biosynthesis. Catalyzes the formation of pyridoxal 5'-phosphate from ribose 5-phosphate (RBP), glyceraldehyde 3-phosphate (G3P) and ammonia. The ammonia is provided by the PdxT subunit. Can also use ribulose 5-phosphate and dihydroxyacetone phosphate as substrates, resulting from enzyme-catalyzed isomerization of RBP and G3P, respectively. The polypeptide is Pyridoxal 5'-phosphate synthase subunit PdxS (Bacillus cereus (strain Q1)).